The primary structure comprises 216 residues: MSNSSTPSCIIIAIAGASASGKSLIASTVHRELCDELGCEEIGIISEDSYYKDQSHLDMEDRIKTNYDHPNSMDRHLLIEHLKALKSGQPVDIPVYSYVEHTRTNQVQHFEPKKVIILEGILLLTDEKLRDEVSVSVFVDTPLDICFIRRLQRDMKERGRSLESVVEQYRKTVRPMFLQFIEPSKQYADIVIPRGGKNRIAINMLKAQIRQLLGKR.

16–23 (GASASGKS) lines the ATP pocket.

It belongs to the uridine kinase family.

The protein localises to the cytoplasm. It carries out the reaction uridine + ATP = UMP + ADP + H(+). The enzyme catalyses cytidine + ATP = CMP + ADP + H(+). It participates in pyrimidine metabolism; CTP biosynthesis via salvage pathway; CTP from cytidine: step 1/3. Its pathway is pyrimidine metabolism; UMP biosynthesis via salvage pathway; UMP from uridine: step 1/1. In Pasteurella multocida (strain Pm70), this protein is Uridine kinase.